A 65-amino-acid polypeptide reads, in one-letter code: Trypsin inhibitor 1 (65 aa).

3 cysteine pairs are disulfide-bonded: C39/C56, C46/C58, and C52/C64.

It belongs to the protease inhibitor I7 (squash-type serine protease inhibitor) family.

It localises to the secreted. Functionally, inhibits trypsin. The sequence is that of Trypsin inhibitor 1 from Trichosanthes kirilowii (Chinese snake gourd).